The sequence spans 704 residues: Polyribonucleotide nucleotidyltransferase (704 aa).

Residues Asp487 and Asp493 each contribute to the Mg(2+) site. The KH domain occupies 554 to 613 (PRLLTIKIHPDKIREVIGKGGSTIQAITKETGTQIDIQDDGTIIIASVNAIAAQAAKSRI). Positions 623–691 (GRIYEGKVAK…KQGRIRLSIK (69 aa)) constitute an S1 motif domain.

It belongs to the polyribonucleotide nucleotidyltransferase family. Component of the RNA degradosome, which is a multiprotein complex involved in RNA processing and mRNA degradation. The cofactor is Mg(2+).

Its subcellular location is the cytoplasm. The enzyme catalyses RNA(n+1) + phosphate = RNA(n) + a ribonucleoside 5'-diphosphate. Involved in mRNA degradation. Catalyzes the phosphorolysis of single-stranded polyribonucleotides processively in the 3'- to 5'-direction. The polypeptide is Polyribonucleotide nucleotidyltransferase (Xanthomonas campestris pv. campestris (strain B100)).